A 71-amino-acid polypeptide reads, in one-letter code: Brevinin-1SN2 (71 aa).

Residues M1–C22 form the signal peptide. Residues E23–Q45 constitute a propeptide, removed in mature form. A disulfide bridge links C65 with C71.

Belongs to the frog skin active peptide (FSAP) family. Brevinin subfamily. As to expression, expressed by the skin glands.

The protein resides in the secreted. Antimicrobial peptide. Active against a variety of Gram-negative and Gram-positive bacterial strains. Active against fungus C.glabrata 090902 and C.albicans ATCC 10231. Shows hemolytic activity against human erythrocytes. The sequence is that of Brevinin-1SN2 from Sylvirana spinulosa (Fine-spined frog).